Here is a 358-residue protein sequence, read N- to C-terminus: Holliday junction branch migration complex subunit RuvB (358 aa).

A disordered region spans residues 1–24 (MAIKRSHNSPPATEENLLTPNPTI). Residues 8–22 (NSPPATEENLLTPNP) are compositionally biased toward polar residues. Residues 13–195 (TEENLLTPNP…FGLIQRLRFY (183 aa)) form a large ATPase domain (RuvB-L) region. ATP is bound by residues isoleucine 34, arginine 35, glycine 76, lysine 79, threonine 80, threonine 81, 142–144 (EDY), arginine 185, tyrosine 195, and arginine 232. Residue threonine 80 coordinates Mg(2+). The tract at residues 196-266 (AVEELTAIIL…LAAEGLNQLN (71 aa)) is small ATPAse domain (RuvB-S). The segment at 269-358 (SMGLDWTDRL…KDRSLPLFEF (90 aa)) is head domain (RuvB-H). DNA is bound by residues arginine 324 and arginine 329.

This sequence belongs to the RuvB family. In terms of assembly, homohexamer. Forms an RuvA(8)-RuvB(12)-Holliday junction (HJ) complex. HJ DNA is sandwiched between 2 RuvA tetramers; dsDNA enters through RuvA and exits via RuvB. An RuvB hexamer assembles on each DNA strand where it exits the tetramer. Each RuvB hexamer is contacted by two RuvA subunits (via domain III) on 2 adjacent RuvB subunits; this complex drives branch migration. In the full resolvosome a probable DNA-RuvA(4)-RuvB(12)-RuvC(2) complex forms which resolves the HJ.

It is found in the cytoplasm. The enzyme catalyses ATP + H2O = ADP + phosphate + H(+). Its function is as follows. The RuvA-RuvB-RuvC complex processes Holliday junction (HJ) DNA during genetic recombination and DNA repair, while the RuvA-RuvB complex plays an important role in the rescue of blocked DNA replication forks via replication fork reversal (RFR). RuvA specifically binds to HJ cruciform DNA, conferring on it an open structure. The RuvB hexamer acts as an ATP-dependent pump, pulling dsDNA into and through the RuvAB complex. RuvB forms 2 homohexamers on either side of HJ DNA bound by 1 or 2 RuvA tetramers; 4 subunits per hexamer contact DNA at a time. Coordinated motions by a converter formed by DNA-disengaged RuvB subunits stimulates ATP hydrolysis and nucleotide exchange. Immobilization of the converter enables RuvB to convert the ATP-contained energy into a lever motion, pulling 2 nucleotides of DNA out of the RuvA tetramer per ATP hydrolyzed, thus driving DNA branch migration. The RuvB motors rotate together with the DNA substrate, which together with the progressing nucleotide cycle form the mechanistic basis for DNA recombination by continuous HJ branch migration. Branch migration allows RuvC to scan DNA until it finds its consensus sequence, where it cleaves and resolves cruciform DNA. The polypeptide is Holliday junction branch migration complex subunit RuvB (Microcystis aeruginosa (strain NIES-843 / IAM M-2473)).